Here is a 557-residue protein sequence, read N- to C-terminus: Ribonuclease J 2 (557 aa).

Residues histidine 76, histidine 78, histidine 144, and glutamate 166 each contribute to the Zn(2+) site. Residue 366 to 370 (HASSH) coordinates substrate.

This sequence belongs to the metallo-beta-lactamase superfamily. RNA-metabolizing metallo-beta-lactamase-like family. Bacterial RNase J subfamily. As to quaternary structure, homodimer, may be a subunit of the RNA degradosome. Zn(2+) is required as a cofactor.

It localises to the cytoplasm. Functionally, an RNase that has 5'-3' exonuclease and possibly endoonuclease activity. Involved in maturation of rRNA and in some organisms also mRNA maturation and/or decay. The protein is Ribonuclease J 2 of Staphylococcus aureus (strain MRSA252).